Reading from the N-terminus, the 547-residue chain is Chaperonin GroEL (547 aa).

ATP is bound by residues 30-33 (TLGP), Lys51, 87-91 (DGTTT), Gly415, and Asp496.

Belongs to the chaperonin (HSP60) family. Forms a cylinder of 14 subunits composed of two heptameric rings stacked back-to-back. Interacts with the co-chaperonin GroES.

The protein resides in the cytoplasm. The enzyme catalyses ATP + H2O + a folded polypeptide = ADP + phosphate + an unfolded polypeptide.. In terms of biological role, together with its co-chaperonin GroES, plays an essential role in assisting protein folding. The GroEL-GroES system forms a nano-cage that allows encapsulation of the non-native substrate proteins and provides a physical environment optimized to promote and accelerate protein folding. The protein is Chaperonin GroEL of Histophilus somni (strain 129Pt) (Haemophilus somnus).